A 96-amino-acid chain; its full sequence is Aspartyl/glutamyl-tRNA(Asn/Gln) amidotransferase subunit C (96 aa).

The protein belongs to the GatC family. In terms of assembly, heterotrimer of A, B and C subunits.

The catalysed reaction is L-glutamyl-tRNA(Gln) + L-glutamine + ATP + H2O = L-glutaminyl-tRNA(Gln) + L-glutamate + ADP + phosphate + H(+). The enzyme catalyses L-aspartyl-tRNA(Asn) + L-glutamine + ATP + H2O = L-asparaginyl-tRNA(Asn) + L-glutamate + ADP + phosphate + 2 H(+). Its function is as follows. Allows the formation of correctly charged Asn-tRNA(Asn) or Gln-tRNA(Gln) through the transamidation of misacylated Asp-tRNA(Asn) or Glu-tRNA(Gln) in organisms which lack either or both of asparaginyl-tRNA or glutaminyl-tRNA synthetases. The reaction takes place in the presence of glutamine and ATP through an activated phospho-Asp-tRNA(Asn) or phospho-Glu-tRNA(Gln). The chain is Aspartyl/glutamyl-tRNA(Asn/Gln) amidotransferase subunit C from Leptospira interrogans serogroup Icterohaemorrhagiae serovar copenhageni (strain Fiocruz L1-130).